Here is a 464-residue protein sequence, read N- to C-terminus: 3-isopropylmalate dehydratase large subunit (464 aa).

[4Fe-4S] cluster-binding residues include Cys-337, Cys-397, and Cys-400.

It belongs to the aconitase/IPM isomerase family. LeuC type 1 subfamily. As to quaternary structure, heterodimer of LeuC and LeuD. [4Fe-4S] cluster is required as a cofactor.

The catalysed reaction is (2R,3S)-3-isopropylmalate = (2S)-2-isopropylmalate. The protein operates within amino-acid biosynthesis; L-leucine biosynthesis; L-leucine from 3-methyl-2-oxobutanoate: step 2/4. Its function is as follows. Catalyzes the isomerization between 2-isopropylmalate and 3-isopropylmalate, via the formation of 2-isopropylmaleate. This is 3-isopropylmalate dehydratase large subunit from Bacillus cereus (strain G9842).